We begin with the raw amino-acid sequence, 573 residues long: MDAKSLTAWSRTLVTFKDVFVDFTREEWKLLDTAQQIVYRNVMLENYKNLVSLGYQLTKPDVILRLEKGEEPWLVEREIHQETHPDSETAFEIKSSVSSRSIFKDKQSCDIKMEGMARNDLWYLSLEEVWKCRDQLDKYQENPERHLRQVAFTQKKVLTQERVSESGKYGGNCLLPAQLVLREYFHKRDSHTKSLKHDLVLNGHQDSCASNSNECGQTFCQNIHLIQFARTHTGDKSYKCPDNDNSLTHGSSLGISKGIHREKPYECKECGKFFSWRSNLTRHQLIHTGEKPYECKECGKSFSRSSHLIGHQKTHTGEEPYECKECGKSFSWFSHLVTHQRTHTGDKLYTCNQCGKSFVHSSRLIRHQRTHTGEKPYECPECGKSFRQSTHLILHQRTHVRVRPYECNECGKSYSQRSHLVVHHRIHTGLKPFECKDCGKCFSRSSHLYSHQRTHTGEKPYECHDCGKSFSQSSALIVHQRIHTGEKPYECCQCGKAFIRKNDLIKHQRIHVGEETYKCNQCGIIFSQNSPFIVHQIAHTGEQFLTCNQCGTALVNTSNLIGYQTNHIRENAY.

The region spanning 14 to 85 (VTFKDVFVDF…EREIHQETHP (72 aa)) is the KRAB domain. The segment at 206-232 (DSCASNSNECGQTFCQNIHLIQFARTH) adopts a C2H2-type 1; atypical zinc-finger fold. 9 consecutive C2H2-type zinc fingers follow at residues 265–287 (YECK…QLIH), 293–315 (YECK…QKTH), 321–343 (YECK…QRTH), 349–371 (YTCN…QRTH), 377–399 (YECP…QRTH), 405–427 (YECN…HRIH), 433–455 (FECK…QRTH), 461–483 (YECH…QRIH), and 489–511 (YECC…QRIH). The segment at 517 to 539 (YKCNQCGIIFSQNSPFIVHQIAH) adopts a C2H2-type 11; atypical zinc-finger fold.

Belongs to the krueppel C2H2-type zinc-finger protein family. As to quaternary structure, interacts (via the KRAB domain) with TRIM28 (via the RBCC domain).

The protein localises to the nucleus. May be involved in transcriptional regulation. This chain is Zinc finger protein 10 (ZNF10), found in Homo sapiens (Human).